The primary structure comprises 886 residues: Putative respiratory burst oxidase homolog protein H (886 aa).

2 disordered regions span residues 1-46 (MKSN…KKNA) and 64-103 (WRKS…TTSS). Topologically, residues 1–316 (MKSNTPTEDS…AELMHENWKK (316 aa)) are cytoplasmic. Positions 64–78 (WRKSGNLGSPSTRKS) are enriched in polar residues. 2 EF-hand-like regions span residues 137–145 (SVDGKLPKE) and 171–183 (RQIE…DKEQ). EF-hand domains lie at 195 to 230 (DLDC…SASA) and 239 to 274 (NAAA…MVTN). Residues D208, N210, D212, K214, and E219 each coordinate Ca(2+). Position 283 is a phosphoserine (S283). Residues 317–337 (LWVLALWAIINVYLFMWKYEE) traverse the membrane as a helical segment. Residues 338–404 (FMRNPLYNIT…INFHKVIAYM (67 aa)) lie on the Extracellular side of the membrane. One can recognise a Ferric oxidoreductase domain in the interval 355 to 512 (KGAAETLKLN…LLVLAYILLI (158 aa)). A helical membrane pass occupies residues 405–421 (IAFQALLHTALHIFCNY). At 422–456 (PRLSSCSYDVFLTYAGAALGNTQPSYLGLMLTSVS) the chain is on the cytoplasmic side. A helical membrane pass occupies residues 457-477 (ITGVLMIFFMGFSFTLAMHYF). Over 478–499 (RRNIVKLPKPFNVLAGFNAFWY) the chain is Extracellular. The chain crosses the membrane as a helical span at residues 500-520 (AHHLLVLAYILLIIHGYYLII). At 521–528 (EKPWYQKT) the chain is on the cytoplasmic side. The chain crosses the membrane as a helical span at residues 529 to 546 (TWMYLAVPMLFYASERLF). Residues 547–688 (SRLLQEHSHR…PYGAPAQNYQ (142 aa)) lie on the Extracellular side of the membrane. The 135-residue stretch at 552–686 (EHSHRVNVIK…KGPYGAPAQN (135 aa)) folds into the FAD-binding FR-type domain. The chain crosses the membrane as a helical span at residues 689 to 709 (KFDILLLVGLGIGATPFISIL). Over 710–886 (KDMLNHLKPG…TRFTFHKENF (177 aa)) the chain is Cytoplasmic.

It belongs to the RBOH (TC 5.B.1.3) family. As to quaternary structure, monomer and homodimer.

Its subcellular location is the membrane. In terms of biological role, calcium-dependent NADPH oxidase that generates superoxide. The protein is Putative respiratory burst oxidase homolog protein H (RBOHH) of Arabidopsis thaliana (Mouse-ear cress).